The chain runs to 432 residues: MGKSVAILGAQWGDEGKGKIVDLLTDRVKYVVRYQGGHNAGHTLIINGEKTVLRLIPSGILRDNVTCLIGNGVVLSPEALMKEMGELEARGINVRDRLKISEACPLILPYHVAMDHAREAALGKNKIGTTGRGIGPAYEDKVARRGLRVSDLFDKEAFAEKLKDILDYYNFQLVHYYKVEPVDFQKTLDDVFAIADVIKGMVADVTTLLHQARKEGVNILFEGAQGTMLDIDHGTYPFVTSSNTTAGGVATGSGFGPRNLDYVLGIIKAYCTRVGSGPFTTELFDEVGAEIARKGNEFGAVTGRPRRCGWFDAVAVRRAVQINSISGFCMTKLDVLDGFEELKICTAYKMPNGEIVEYAPMAAKDWKGVEPIYETMPGWSENTFRVTKREELPQAALDYIKRIEELVGVPVDILSTGPDRVETMILRDPFAA.

GTP-binding positions include 13 to 19 (GDEGKGK) and 41 to 43 (GHT). Residue D14 is the Proton acceptor of the active site. 2 residues coordinate Mg(2+): D14 and G41. IMP is bound by residues 14–17 (DEGK), 39–42 (NAGH), T130, R144, Q225, T240, and R304. The active-site Proton donor is the H42. 300-306 (AVTGRPR) contacts substrate. GTP-binding positions include R306, 332-334 (KLD), and 415-417 (STG).

Belongs to the adenylosuccinate synthetase family. In terms of assembly, homodimer. Requires Mg(2+) as cofactor.

It localises to the cytoplasm. The enzyme catalyses IMP + L-aspartate + GTP = N(6)-(1,2-dicarboxyethyl)-AMP + GDP + phosphate + 2 H(+). Its pathway is purine metabolism; AMP biosynthesis via de novo pathway; AMP from IMP: step 1/2. Functionally, plays an important role in the de novo pathway of purine nucleotide biosynthesis. Catalyzes the first committed step in the biosynthesis of AMP from IMP. In Actinobacillus pleuropneumoniae serotype 5b (strain L20), this protein is Adenylosuccinate synthetase.